The sequence spans 222 residues: Triosephosphate isomerase (222 aa).

Substrate is bound at residue 9-11 (NLK). H93 functions as the Electrophile in the catalytic mechanism. The active-site Proton acceptor is the E141. Residues I146, G181, and 202 to 203 (AS) contribute to the substrate site.

It belongs to the triosephosphate isomerase family. Homotetramer; dimer of dimers.

The protein resides in the cytoplasm. It catalyses the reaction D-glyceraldehyde 3-phosphate = dihydroxyacetone phosphate. Its pathway is carbohydrate biosynthesis; gluconeogenesis. The protein operates within carbohydrate degradation; glycolysis; D-glyceraldehyde 3-phosphate from glycerone phosphate: step 1/1. In terms of biological role, involved in the gluconeogenesis. Catalyzes stereospecifically the conversion of dihydroxyacetone phosphate (DHAP) to D-glyceraldehyde-3-phosphate (G3P). This Methanoculleus marisnigri (strain ATCC 35101 / DSM 1498 / JR1) protein is Triosephosphate isomerase.